The chain runs to 162 residues: Succinate dehydrogenase assembly factor 2, mitochondrial (162 aa).

The N-terminal 35 residues, 1–35 (MHNMFPALTKTLSLQGYKIINSQTGSAAWSCGRRW), are a transit peptide targeting the mitochondrion.

Belongs to the SDHAF2 family. In terms of assembly, interacts with the flavoprotein subunit within the SDH catalytic dimer.

The protein resides in the mitochondrion matrix. Its function is as follows. Plays an essential role in the assembly of succinate dehydrogenase (SDH), an enzyme complex (also referred to as respiratory complex II) that is a component of both the tricarboxylic acid (TCA) cycle and the mitochondrial electron transport chain, and which couples the oxidation of succinate to fumarate with the reduction of ubiquinone (coenzyme Q) to ubiquinol. Required for flavinylation (covalent attachment of FAD) of the flavoprotein subunit of the SDH catalytic dimer. The sequence is that of Succinate dehydrogenase assembly factor 2, mitochondrial from Saccharomyces cerevisiae (strain RM11-1a) (Baker's yeast).